Consider the following 324-residue polypeptide: MITSNRKPIVPDFMRPVAELEGQVEELKKLAPKNDIIINNKIARFQNQLVKLQKEIFSSLTPLQRLHLVRQSERPTTLDYIPGILDEWIELHGDRGGADDPALVGGIGKINGRNIVFIGHQRGRGTKENVARNFGMPAPGGYRKALRLMKHANRFGMPILTFIDTPGAWAGLKAEELGQGEAIAVNLREMFSFEVPIVCTIIGEGGSGGALGIGIGDSILMLEYAIYTVATPEACAAILWKNSKESLAAAEALKITSHDLKVLGIVDEILQEPLGGAQADPYTASQYLKKELTEQLDSLSKLDSQTLKKRRYEKFRRMGAFYEI.

The CoA carboxyltransferase C-terminal domain maps to 44–298 (RFQNQLVKLQ…KKELTEQLDS (255 aa)).

This sequence belongs to the AccA family. As to quaternary structure, acetyl-CoA carboxylase is a heterohexamer composed of biotin carboxyl carrier protein (accB), biotin carboxylase (accC) and two subunits each of ACCase subunit alpha (accA) and ACCase subunit beta (accD).

Its subcellular location is the plastid. The protein localises to the chloroplast. The enzyme catalyses N(6)-carboxybiotinyl-L-lysyl-[protein] + acetyl-CoA = N(6)-biotinyl-L-lysyl-[protein] + malonyl-CoA. It participates in lipid metabolism; malonyl-CoA biosynthesis; malonyl-CoA from acetyl-CoA: step 1/1. In terms of biological role, component of the acetyl coenzyme A carboxylase (ACC) complex. First, biotin carboxylase catalyzes the carboxylation of biotin on its carrier protein (BCCP) and then the CO(2) group is transferred by the carboxyltransferase to acetyl-CoA to form malonyl-CoA. This chain is Acetyl-coenzyme A carboxylase carboxyl transferase subunit alpha, found in Pyropia yezoensis (Susabi-nori).